A 184-amino-acid chain; its full sequence is MVEQRRLASTEWVDIVNEDNEVIAQSSREQMRAQRLRHRATYIVVHDGMGKILVQRRTETKDFLPGMLDATAGGVVQADEQLLESARREAEEELGIAGVPFAEHGLFYFEDQHCRVWGALFSCVSHGPFALQEDEVSEVCWLTPEEITARCDEFTPDSLKALALWMTRNAKNEAALQEKPEETE.

Residues 36 to 164 (LRHRATYIVV…TPDSLKALAL (129 aa)) form the Nudix hydrolase domain. Positions 73–95 (GGVVQADEQLLESARREAEEELG) match the Nudix box motif. Mg(2+)-binding residues include glutamate 89 and glutamate 93.

The protein belongs to the Nudix hydrolase family. Requires Mg(2+) as cofactor.

This is an uncharacterized protein from Salmonella typhi.